A 172-amino-acid chain; its full sequence is Translation initiation factor IF-3 (172 aa).

The protein belongs to the IF-3 family. As to quaternary structure, monomer.

The protein resides in the cytoplasm. IF-3 binds to the 30S ribosomal subunit and shifts the equilibrium between 70S ribosomes and their 50S and 30S subunits in favor of the free subunits, thus enhancing the availability of 30S subunits on which protein synthesis initiation begins. In Geobacillus stearothermophilus (Bacillus stearothermophilus), this protein is Translation initiation factor IF-3.